Here is a 164-residue protein sequence, read N- to C-terminus: Reticulon-like protein B22 (164 aa).

The 164-residue stretch at 1-164 (MGEMGKAMGL…ILEQEAHSDT (164 aa)) folds into the Reticulon domain. 2 consecutive transmembrane segments (helical) span residues 30-50 (SLFS…GLLF) and 117-137 (LISG…SMLC).

It localises to the endoplasmic reticulum membrane. The chain is Reticulon-like protein B22 (RTNLB22) from Arabidopsis thaliana (Mouse-ear cress).